We begin with the raw amino-acid sequence, 318 residues long: Taste receptor type 2 member 60 (318 aa).

At 1–7 (MNGDHMV) the chain is on the extracellular side. The helical transmembrane segment at 8-28 (LGSSVTDKKAIILVTILLLLR) threads the bilayer. Topologically, residues 29 to 40 (LVAIAGNGFITA) are cytoplasmic. A helical transmembrane segment spans residues 41-61 (ALGVEWVLRRMLLPCDKLLVS). Residues 62-88 (LGASRFCLQSVVMGKTIYVFLHPMAFP) are Extracellular-facing. A helical transmembrane segment spans residues 89–109 (YNPVLQFLAFQWDFLNAATLW). Residues 110–128 (SSTWLSVFYCVKIATFTHP) are Cytoplasmic-facing. The helical transmembrane segment at 129–149 (VFFWLKHKLSGWLPWMLFSSV) threads the bilayer. Residues 150 to 183 (GLSSFTTILFFIGNHRMYQNYLRNHLQPWNVTGD) lie on the Extracellular side of the membrane. An N-linked (GlcNAc...) asparagine glycan is attached at Asn-179. A helical membrane pass occupies residues 184–204 (SIRSYCEKFYLFPLKMITWTM). Topologically, residues 205–234 (PTAVFFICMILLITSLGRHRKKALLTTSGF) are cytoplasmic. Residues 235–255 (REPSVQAHIKALLALLSFAML) form a helical membrane-spanning segment. The Extracellular segment spans residues 256–264 (FISYFLSLV). A helical membrane pass occupies residues 265–285 (FSAAGIFPPLDFKFWVWESVI). At 286–318 (YLCAAVHPIILLFSNCRLRAVLKSRRSSRCGTP) the chain is on the cytoplasmic side.

Belongs to the G-protein coupled receptor T2R family. Expressed in subsets of taste receptor cells of the tongue and exclusively in gustducin-positive cells.

It localises to the membrane. Its function is as follows. Receptor that may play a role in the perception of bitterness and is gustducin-linked. May play a role in sensing the chemical composition of the gastrointestinal content. The activity of this receptor may stimulate alpha gustducin, mediate PLC-beta-2 activation and lead to the gating of TRPM5. The protein is Taste receptor type 2 member 60 (TAS2R60) of Homo sapiens (Human).